Reading from the N-terminus, the 945-residue chain is Isoleucine--tRNA ligase (945 aa).

Positions 66–76 match the 'HIGH' region motif; the sequence is PYANGDIHLGH. Glu-581 contacts L-isoleucyl-5'-AMP. A 'KMSKS' region motif is present at residues 622–626; sequence KMSKS. Residue Lys-625 coordinates ATP. Zn(2+) contacts are provided by Cys-908, Cys-911, Cys-928, and Cys-931.

This sequence belongs to the class-I aminoacyl-tRNA synthetase family. IleS type 1 subfamily. Monomer. The cofactor is Zn(2+).

Its subcellular location is the cytoplasm. The catalysed reaction is tRNA(Ile) + L-isoleucine + ATP = L-isoleucyl-tRNA(Ile) + AMP + diphosphate. Catalyzes the attachment of isoleucine to tRNA(Ile). As IleRS can inadvertently accommodate and process structurally similar amino acids such as valine, to avoid such errors it has two additional distinct tRNA(Ile)-dependent editing activities. One activity is designated as 'pretransfer' editing and involves the hydrolysis of activated Val-AMP. The other activity is designated 'posttransfer' editing and involves deacylation of mischarged Val-tRNA(Ile). This is Isoleucine--tRNA ligase from Burkholderia cenocepacia (strain ATCC BAA-245 / DSM 16553 / LMG 16656 / NCTC 13227 / J2315 / CF5610) (Burkholderia cepacia (strain J2315)).